Reading from the N-terminus, the 466-residue chain is MKPFMDKDFLLSTETAKTLYHDYAAQVPIIDYHCHINPEEIAKDRSFDTITQVWLGGDHYKWRQMRSNGIDEKYITGDASDIEKFEKWAETLQKAIGNPLYHWSHLELQRYFDYYGTLSAKTSEEVFKLCNEKLSQPEMSVRGLIKESNVDTICTTDDPIDSLEWHKAIAKDSTFDVKVLPAWRPDKAMNLEKPDYLDYLAKLESVSGVKIASFAGLMEALKVRLEFFNSMGCKVSDHALSYVMYKPATEEEIEAIFAKRLAGGTISEMEELQFKTAFMVSVGREYNRLGWVMQLHYGTKRDNNVFRFNQLGADTGFDCINTEGSSAELANFLNALNSSDELPKTIIYSLNPTDNAAIGTVLGCFQDSTAVGKIQQGSAWWFNDNKTGMIDQMTSLANLGLLANFVGMLTDSRSFLSYTRHEYFRRILCELIGNWVENGEYPNDIEFLGQMVQDISYYNTKRYFGF.

It belongs to the metallo-dependent hydrolases superfamily. Uronate isomerase family.

The enzyme catalyses D-glucuronate = D-fructuronate. The catalysed reaction is aldehydo-D-galacturonate = keto-D-tagaturonate. It participates in carbohydrate metabolism; pentose and glucuronate interconversion. This is Uronate isomerase from Lachnoclostridium phytofermentans (strain ATCC 700394 / DSM 18823 / ISDg) (Clostridium phytofermentans).